The sequence spans 248 residues: UPF0173 metal-dependent hydrolase Hlac_1347 (248 aa).

It belongs to the UPF0173 family.

This Halorubrum lacusprofundi (strain ATCC 49239 / DSM 5036 / JCM 8891 / ACAM 34) protein is UPF0173 metal-dependent hydrolase Hlac_1347.